Here is a 603-residue protein sequence, read N- to C-terminus: UvrABC system protein C (603 aa).

Residues 13-92 (NGPGVYLMKD…IRKHKPRYNI (80 aa)) enclose the GIY-YIG domain. In terms of domain architecture, UVR spans 202-237 (NDLLQKIKEQMAAASERQEYELAARLRDRMFAIQAT).

Belongs to the UvrC family. As to quaternary structure, interacts with UvrB in an incision complex.

Its subcellular location is the cytoplasm. Its function is as follows. The UvrABC repair system catalyzes the recognition and processing of DNA lesions. UvrC both incises the 5' and 3' sides of the lesion. The N-terminal half is responsible for the 3' incision and the C-terminal half is responsible for the 5' incision. In Desulfatibacillum aliphaticivorans, this protein is UvrABC system protein C.